A 449-amino-acid polypeptide reads, in one-letter code: Adenylosuccinate synthetase (449 aa).

Residues 12–18 (GDEGKGK) and 40–42 (GHT) contribute to the GTP site. Catalysis depends on aspartate 13, which acts as the Proton acceptor. The Mg(2+) site is built by aspartate 13 and glycine 40. IMP-binding positions include 13–16 (DEGK), 38–41 (NAGH), threonine 128, arginine 142, glutamine 223, threonine 238, and arginine 302. Histidine 41 (proton donor) is an active-site residue. Position 298 to 304 (298 to 304 (TTTGRQR)) interacts with substrate. Residues arginine 304, 330-332 (KLD), and 412-414 (SLG) contribute to the GTP site.

The protein belongs to the adenylosuccinate synthetase family. In terms of assembly, homodimer. It depends on Mg(2+) as a cofactor.

It localises to the cytoplasm. The catalysed reaction is IMP + L-aspartate + GTP = N(6)-(1,2-dicarboxyethyl)-AMP + GDP + phosphate + 2 H(+). It participates in purine metabolism; AMP biosynthesis via de novo pathway; AMP from IMP: step 1/2. Its function is as follows. Plays an important role in the de novo pathway of purine nucleotide biosynthesis. Catalyzes the first committed step in the biosynthesis of AMP from IMP. The chain is Adenylosuccinate synthetase from Synechococcus sp. (strain JA-2-3B'a(2-13)) (Cyanobacteria bacterium Yellowstone B-Prime).